Reading from the N-terminus, the 98-residue chain is Small ribosomal subunit protein uS19 (98 aa).

The segment at 77-98 (TRTYRGHAGGKSEKGGSAPRKK) is disordered.

This sequence belongs to the universal ribosomal protein uS19 family.

In terms of biological role, protein S19 forms a complex with S13 that binds strongly to the 16S ribosomal RNA. The chain is Small ribosomal subunit protein uS19 from Chlorobium phaeobacteroides (strain BS1).